Here is a 679-residue protein sequence, read N- to C-terminus: UvrABC system protein B (679 aa).

The 388-residue stretch at 25 to 412 (QGVNSGEEFQ…EGKFIEQVIR (388 aa)) folds into the Helicase ATP-binding domain. 38-45 (GATGTGKT) provides a ligand contact to ATP. A Beta-hairpin motif is present at residues 91–114 (YYDYYQPEAYVPVSDTYIAKTASI). In terms of domain architecture, Helicase C-terminal spans 429–583 (QIDDLLSEIR…KKYNQINGIT (155 aa)). Residues 639 to 674 (PSLIDKLENKMKDAAKELNFEEAANLRDRIKKLRQK) enclose the UVR domain.

The protein belongs to the UvrB family. As to quaternary structure, forms a heterotetramer with UvrA during the search for lesions. Interacts with UvrC in an incision complex.

It is found in the cytoplasm. In terms of biological role, the UvrABC repair system catalyzes the recognition and processing of DNA lesions. A damage recognition complex composed of 2 UvrA and 2 UvrB subunits scans DNA for abnormalities. Upon binding of the UvrA(2)B(2) complex to a putative damaged site, the DNA wraps around one UvrB monomer. DNA wrap is dependent on ATP binding by UvrB and probably causes local melting of the DNA helix, facilitating insertion of UvrB beta-hairpin between the DNA strands. Then UvrB probes one DNA strand for the presence of a lesion. If a lesion is found the UvrA subunits dissociate and the UvrB-DNA preincision complex is formed. This complex is subsequently bound by UvrC and the second UvrB is released. If no lesion is found, the DNA wraps around the other UvrB subunit that will check the other stand for damage. This chain is UvrABC system protein B, found in Prochlorococcus marinus subsp. pastoris (strain CCMP1986 / NIES-2087 / MED4).